Reading from the N-terminus, the 475-residue chain is Protein FAM161A (475 aa).

The tract at residues 53-107 (ISDSSSSSASEKSCSHPALSVTSLSEPDLDGSSSLSTTTDEGLPDLEEKTPGESS) is disordered. Composition is skewed to low complexity over residues 54–64 (SDSSSSSASEK) and 82–93 (DGSSSLSTTTDE). Positions 162–234 (VREQNRREKA…RERNRAALLA (73 aa)) form a coiled coil. The tract at residues 255–434 (KLRDLFRAKR…PTASSRGREQ (180 aa)) is required for interaction with CFAP418. The interval 314 to 337 (RSACRRFRDPRSPAKPRGKHRRRC) is disordered. A compositionally biased stretch (basic residues) spans 327–337 (AKPRGKHRRRC). Lys-377 is covalently cross-linked (Glycyl lysine isopeptide (Lys-Gly) (interchain with G-Cter in SUMO2)). Positions 389 to 441 (EEILRETRRPGRSPRRKSPGRSSNPKPRPHECSPPMPTASSRGREQAIRRSEK) are disordered. Residues 398–407 (PGRSPRRKSP) show a composition bias toward basic residues. Positions 430–441 (RGREQAIRRSEK) are enriched in basic and acidic residues.

It belongs to the FAM161 family. In terms of assembly, interacts (via central region) with CFAP418 (via N-terminus); the interaction is direct. Interacts (via C-terminus) with microtubules. Interacts with LCA5. Interacts with CEP290. Interacts with SDCCAG8. Interacts with FAM161B. Interacts with POC1B. Interacts with CEP78. Forms a microtubule-associated complex with POC5, CETN2 and POC1B. Interacts with CCDC15. As to expression, expressed in the retina.

The protein localises to the cytoplasm. It is found in the cytoskeleton. The protein resides in the cilium basal body. It localises to the cell projection. Its subcellular location is the cilium. The protein localises to the microtubule organizing center. It is found in the centrosome. The protein resides in the centriole. Its function is as follows. Involved in ciliogenesis. The protein is Protein FAM161A of Mus musculus (Mouse).